The primary structure comprises 648 residues: 1-deoxy-D-xylulose-5-phosphate synthase 1 (648 aa).

Thiamine diphosphate contacts are provided by residues H82 and 123–125 (AHS). D154 lines the Mg(2+) pocket. Thiamine diphosphate-binding positions include 155–156 (GS), N183, Y292, and E374. N183 lines the Mg(2+) pocket.

The protein belongs to the transketolase family. DXPS subfamily. Homodimer. Requires Mg(2+) as cofactor. The cofactor is thiamine diphosphate.

It carries out the reaction D-glyceraldehyde 3-phosphate + pyruvate + H(+) = 1-deoxy-D-xylulose 5-phosphate + CO2. Its pathway is metabolic intermediate biosynthesis; 1-deoxy-D-xylulose 5-phosphate biosynthesis; 1-deoxy-D-xylulose 5-phosphate from D-glyceraldehyde 3-phosphate and pyruvate: step 1/1. Functionally, catalyzes the acyloin condensation reaction between C atoms 2 and 3 of pyruvate and glyceraldehyde 3-phosphate to yield 1-deoxy-D-xylulose-5-phosphate (DXP). This is 1-deoxy-D-xylulose-5-phosphate synthase 1 from Cereibacter sphaeroides (strain ATCC 17023 / DSM 158 / JCM 6121 / CCUG 31486 / LMG 2827 / NBRC 12203 / NCIMB 8253 / ATH 2.4.1.) (Rhodobacter sphaeroides).